Here is a 228-residue protein sequence, read N- to C-terminus: Somatolactin (228 aa).

A signal peptide spans 1 to 24 (MFSIRMNKVLQGFVCLMLTHRIVG). Cystine bridges form between C29/C38, C88/C200, and C217/C225. 2 N-linked (GlcNAc...) asparagine glycosylation sites follow: N141 and N177.

The protein belongs to the somatotropin/prolactin family.

It is found in the secreted. This chain is Somatolactin, found in Anguilla anguilla (European freshwater eel).